The sequence spans 382 residues: MSTWLLPENIADVLPSEARKIEELRRRLLDRFRSYGYEMVMPPLLEYLESLLTSGGADLRLRTFKLVDQLSGRTLGLRADITPQVARIDAHLLNRQGVTRLCYAGHVMHTRPRGLHATREQIQIGAEIYGHAGLEADLEIQQLMLDALHLAGLSRIRLDLCHAGVLAALLARDPQAAERGESLYDALSGKDVPLLNELTDDLGADTRAALCALPHLYGDASVLDEARARLPVLPEITRALDDLAQLAAQAKGVEVAIDLADLRGYAYHSGAMFTAYIDGVPNAIARGGRYDHVGQAYGRARPATGFSLDLRELARISPIEARGTAILAPWAQDDALGAAVAALRDAGEVVIQALPGHDHVLDEFACDRSLVERNGAWVVEPR.

This sequence belongs to the class-II aminoacyl-tRNA synthetase family. HisZ subfamily. As to quaternary structure, heteromultimer composed of HisG and HisZ subunits.

It localises to the cytoplasm. It functions in the pathway amino-acid biosynthesis; L-histidine biosynthesis; L-histidine from 5-phospho-alpha-D-ribose 1-diphosphate: step 1/9. Functionally, required for the first step of histidine biosynthesis. May allow the feedback regulation of ATP phosphoribosyltransferase activity by histidine. The chain is ATP phosphoribosyltransferase regulatory subunit from Burkholderia ambifaria (strain MC40-6).